The chain runs to 658 residues: Threonine--tRNA ligase (658 aa).

In terms of domain architecture, TGS spans 1–61 (MIELVFPDGS…EKGGAFKILT (61 aa)). Residues 243–535 (DHRKLGRQMD…LIENYAGAFP (293 aa)) form a catalytic region. Cys-335, His-386, and His-512 together coordinate Zn(2+).

Belongs to the class-II aminoacyl-tRNA synthetase family. As to quaternary structure, homodimer. It depends on Zn(2+) as a cofactor.

The protein localises to the cytoplasm. It catalyses the reaction tRNA(Thr) + L-threonine + ATP = L-threonyl-tRNA(Thr) + AMP + diphosphate + H(+). Catalyzes the attachment of threonine to tRNA(Thr) in a two-step reaction: L-threonine is first activated by ATP to form Thr-AMP and then transferred to the acceptor end of tRNA(Thr). Also edits incorrectly charged L-seryl-tRNA(Thr). The sequence is that of Threonine--tRNA ligase from Phenylobacterium zucineum (strain HLK1).